Reading from the N-terminus, the 307-residue chain is Porphobilinogen deaminase (307 aa).

S-(dipyrrolylmethanemethyl)cysteine is present on Cys-241.

It belongs to the HMBS family. In terms of assembly, monomer. Dipyrromethane serves as cofactor.

The enzyme catalyses 4 porphobilinogen + H2O = hydroxymethylbilane + 4 NH4(+). It functions in the pathway porphyrin-containing compound metabolism; protoporphyrin-IX biosynthesis; coproporphyrinogen-III from 5-aminolevulinate: step 2/4. Tetrapolymerization of the monopyrrole PBG into the hydroxymethylbilane pre-uroporphyrinogen in several discrete steps. In Macrococcus caseolyticus (strain JCSC5402) (Macrococcoides caseolyticum), this protein is Porphobilinogen deaminase.